The chain runs to 289 residues: DegV domain-containing protein YteA (289 aa).

Positions 3–284 (FQIMTDSTAD…DGTIAIFSIS (282 aa)) constitute a DegV domain. Residues threonine 62 and serine 94 each coordinate hexadecanoate.

May bind long-chain fatty acids, such as palmitate, and may play a role in lipid transport or fatty acid metabolism. The protein is DegV domain-containing protein YteA (yteA) of Lactococcus lactis subsp. lactis (strain IL1403) (Streptococcus lactis).